Reading from the N-terminus, the 367-residue chain is Mitogen-activated protein kinase 12 (367 aa).

The Protein kinase domain maps to 27-311; the sequence is YQDLQPVGSG…AAEALTHPYF (285 aa). ATP contacts are provided by residues 33-41 and K56; that span reads VGSGAYGAV. The active-site Proton acceptor is D153. A Phosphothreonine modification is found at T183. The TXY signature appears at 183 to 185; it reads TGY. Residue Y185 is modified to Phosphotyrosine.

Belongs to the protein kinase superfamily. CMGC Ser/Thr protein kinase family. MAP kinase subfamily. In terms of assembly, monomer. Interacts with the PDZ domain of the syntrophin SNTA1. Interacts with SH3BP5, LIN7C, SCRIB and SYNJ2BP. Interacts with PTPN4; this interaction induces the activation of PTPN4 phosphatase activity. Requires Mg(2+) as cofactor. In terms of processing, dually phosphorylated on Thr-183 and Tyr-185 by MAP2K3/MKK3 and MAP2K6/MKK6, which activates the enzyme. Ubiquitinated. Ubiquitination leads to degradation by the proteasome pathway. Highly expressed in skeletal muscle. Also expressed in the heart, particularly in cardiac myocytes, lung, thymus and testes.

Its subcellular location is the cytoplasm. The protein localises to the nucleus. It is found in the mitochondrion. It carries out the reaction L-seryl-[protein] + ATP = O-phospho-L-seryl-[protein] + ADP + H(+). The enzyme catalyses L-threonyl-[protein] + ATP = O-phospho-L-threonyl-[protein] + ADP + H(+). With respect to regulation, activated by phosphorylation on threonine and tyrosine. MAP2K3/MKK3 and MAP2K6/MKK6 are both essential for the activation of MAPK12 induced by environmental stress, whereas MAP2K6/MKK6 is the major MAPK12 activator in response to TNF-alpha. Its function is as follows. Serine/threonine kinase which acts as an essential component of the MAP kinase signal transduction pathway. MAPK12 is one of the four p38 MAPKs which play an important role in the cascades of cellular responses evoked by extracellular stimuli such as pro-inflammatory cytokines or physical stress leading to direct activation of transcription factors such as ELK1 and ATF2. Accordingly, p38 MAPKs phosphorylate a broad range of proteins and it has been estimated that they may have approximately 200 to 300 substrates each. Some of the targets are downstream kinases such as MAPKAPK2, which are activated through phosphorylation and further phosphorylate additional targets. Plays a role in myoblast differentiation and also in the down-regulation of cyclin D1 in response to hypoxia in adrenal cells suggesting MAPK12 may inhibit cell proliferation while promoting differentiation. Phosphorylates DLG1. Following osmotic shock, MAPK12 in the cell nucleus increases its association with nuclear DLG1, thereby causing dissociation of DLG1-SFPQ complexes. This function is independent of its catalytic activity and could affect mRNA processing and/or gene transcription to aid cell adaptation to osmolarity changes in the environment. Regulates UV-induced checkpoint signaling and repair of UV-induced DNA damage and G2 arrest after gamma-radiation exposure. MAPK12 is involved in the regulation of SLC2A1 expression and basal glucose uptake in L6 myotubes; and negatively regulates SLC2A4 expression and contraction-mediated glucose uptake in adult skeletal muscle. C-Jun (JUN) phosphorylation is stimulated by MAPK14 and inhibited by MAPK12, leading to a distinct AP-1 regulation. MAPK12 is required for the normal kinetochore localization of PLK1, prevents chromosomal instability and supports mitotic cell viability. MAPK12-signaling is also positively regulating the expansion of transient amplifying myogenic precursor cells during muscle growth and regeneration. The protein is Mitogen-activated protein kinase 12 (Mapk12) of Mus musculus (Mouse).